A 166-amino-acid chain; its full sequence is Cyanate hydratase (166 aa).

Active-site residues include arginine 92, glutamate 95, and serine 118.

It belongs to the cyanase family.

It catalyses the reaction cyanate + hydrogencarbonate + 3 H(+) = NH4(+) + 2 CO2. Its function is as follows. Catalyzes the reaction of cyanate with bicarbonate to produce ammonia and carbon dioxide. In Sorghum bicolor (Sorghum), this protein is Cyanate hydratase.